Here is a 290-residue protein sequence, read N- to C-terminus: 33 kDa chaperonin (290 aa).

Disulfide bonds link C235/C237 and C268/C271.

Belongs to the HSP33 family. Post-translationally, under oxidizing conditions two disulfide bonds are formed involving the reactive cysteines. Under reducing conditions zinc is bound to the reactive cysteines and the protein is inactive.

The protein localises to the cytoplasm. Its function is as follows. Redox regulated molecular chaperone. Protects both thermally unfolding and oxidatively damaged proteins from irreversible aggregation. Plays an important role in the bacterial defense system toward oxidative stress. The polypeptide is 33 kDa chaperonin (Streptococcus pneumoniae (strain JJA)).